Here is a 257-residue protein sequence, read N- to C-terminus: UPF0246 protein lpg1366 (257 aa).

The protein belongs to the UPF0246 family.

This Legionella pneumophila subsp. pneumophila (strain Philadelphia 1 / ATCC 33152 / DSM 7513) protein is UPF0246 protein lpg1366.